A 101-amino-acid chain; its full sequence is NAD(P)H-quinone oxidoreductase subunit 4L, chloroplastic (101 aa).

3 helical membrane-spanning segments follow: residues 2–22 (ILEHVLVLSAYLFSIGIYGLI), 30–52 (ALMCLELLLNSVNLNFVTFSDFF), and 61–81 (IFSIFIIAIAAAEATIGLAIV).

It belongs to the complex I subunit 4L family. NDH is composed of at least 16 different subunits, 5 of which are encoded in the nucleus.

Its subcellular location is the plastid. The protein localises to the chloroplast thylakoid membrane. The enzyme catalyses a plastoquinone + NADH + (n+1) H(+)(in) = a plastoquinol + NAD(+) + n H(+)(out). It catalyses the reaction a plastoquinone + NADPH + (n+1) H(+)(in) = a plastoquinol + NADP(+) + n H(+)(out). NDH shuttles electrons from NAD(P)H:plastoquinone, via FMN and iron-sulfur (Fe-S) centers, to quinones in the photosynthetic chain and possibly in a chloroplast respiratory chain. The immediate electron acceptor for the enzyme in this species is believed to be plastoquinone. Couples the redox reaction to proton translocation, and thus conserves the redox energy in a proton gradient. This is NAD(P)H-quinone oxidoreductase subunit 4L, chloroplastic from Oenothera glazioviana (Large-flowered evening primrose).